The following is a 348-amino-acid chain: Mannonate dehydratase (348 aa).

Belongs to the mannonate dehydratase family. Fe(2+) is required as a cofactor. It depends on Mn(2+) as a cofactor.

It catalyses the reaction D-mannonate = 2-dehydro-3-deoxy-D-gluconate + H2O. The protein operates within carbohydrate metabolism; pentose and glucuronate interconversion. In terms of biological role, catalyzes the dehydration of D-mannonate. The chain is Mannonate dehydratase from Streptococcus uberis (strain ATCC BAA-854 / 0140J).